The following is a 570-amino-acid chain: Sulfite reductase [NADPH] hemoprotein beta-component (570 aa).

[4Fe-4S] cluster contacts are provided by Cys-434, Cys-440, Cys-479, and Cys-483. Residue Cys-483 participates in siroheme binding.

The protein belongs to the nitrite and sulfite reductase 4Fe-4S domain family. As to quaternary structure, alpha(8)-beta(8). The alpha component is a flavoprotein, the beta component is a hemoprotein. Siroheme is required as a cofactor. [4Fe-4S] cluster serves as cofactor.

It catalyses the reaction hydrogen sulfide + 3 NADP(+) + 3 H2O = sulfite + 3 NADPH + 4 H(+). It participates in sulfur metabolism; hydrogen sulfide biosynthesis; hydrogen sulfide from sulfite (NADPH route): step 1/1. Functionally, component of the sulfite reductase complex that catalyzes the 6-electron reduction of sulfite to sulfide. This is one of several activities required for the biosynthesis of L-cysteine from sulfate. The sequence is that of Sulfite reductase [NADPH] hemoprotein beta-component from Shigella flexneri.